We begin with the raw amino-acid sequence, 118 residues long: Large ribosomal subunit protein uL18 (118 aa).

Positions 1 to 25 are disordered; the sequence is MISKPDKNKLRQKRHRRVRGKLSGT. Basic residues predominate over residues 10 to 20; the sequence is LRQKRHRRVRG.

The protein belongs to the universal ribosomal protein uL18 family. In terms of assembly, part of the 50S ribosomal subunit; part of the 5S rRNA/L5/L18/L25 subcomplex. Contacts the 5S and 23S rRNAs.

This is one of the proteins that bind and probably mediate the attachment of the 5S RNA into the large ribosomal subunit, where it forms part of the central protuberance. In Streptococcus pneumoniae (strain Hungary19A-6), this protein is Large ribosomal subunit protein uL18.